Consider the following 188-residue polypeptide: dCTP deaminase (188 aa).

Residues 111–116 (KSTYAR), 135–137 (TLE), Gln156, Tyr170, and Gln180 contribute to the dCTP site. Glu137 serves as the catalytic Proton donor/acceptor.

This sequence belongs to the dCTP deaminase family. In terms of assembly, homotrimer.

The enzyme catalyses dCTP + H2O + H(+) = dUTP + NH4(+). It functions in the pathway pyrimidine metabolism; dUMP biosynthesis; dUMP from dCTP (dUTP route): step 1/2. In terms of biological role, catalyzes the deamination of dCTP to dUTP. This is dCTP deaminase from Coxiella burnetii (strain CbuK_Q154) (Coxiella burnetii (strain Q154)).